A 150-amino-acid polypeptide reads, in one-letter code: Deoxyuridine 5'-triphosphate nucleotidohydrolase (150 aa).

Substrate contacts are provided by residues Arg-67 to Ser-69, Asn-80, and Val-84 to Asp-86.

This sequence belongs to the dUTPase family. Requires Mg(2+) as cofactor.

The catalysed reaction is dUTP + H2O = dUMP + diphosphate + H(+). It functions in the pathway pyrimidine metabolism; dUMP biosynthesis; dUMP from dCTP (dUTP route): step 2/2. Functionally, this enzyme is involved in nucleotide metabolism: it produces dUMP, the immediate precursor of thymidine nucleotides and it decreases the intracellular concentration of dUTP so that uracil cannot be incorporated into DNA. In Lactococcus lactis subsp. lactis (strain IL1403) (Streptococcus lactis), this protein is Deoxyuridine 5'-triphosphate nucleotidohydrolase (dut).